The primary structure comprises 368 residues: SH3 domain-containing protein 2 (368 aa).

Coiled-coil stretches lie at residues 1 to 21 (MDAI…QQQA) and 146 to 210 (LEDA…LGKE). One can recognise a BAR domain in the interval 1 to 264 (MDAIRKQASR…MVSERQRIEA (264 aa)). A disordered region spans residues 258 to 281 (ERQRIEAPSTPSSADSMPPPPSYE). In terms of domain architecture, SH3 spans 299–358 (MGYFLGEVLFPYHGVTDVELSLSTGEYVVVRKVTGSGWAEGECKGKAGWFPYGYIERRER).

In terms of assembly, homodimer. Interacts with FREE1. Interacts (via SH3 domain) with ATG8E and ATG8F. Component of a phosphoinositide 3-kinase (PI3K) complex containing ATG6, SH3P2 and FREE1. Binds to SH3P3 and DRP1A. Forms a complex made of SH3P2 and DRP1A and triggers its accumulation at the cell plate. In terms of tissue distribution, highly expressed in seedlings. Detected in flowers, leaves and stems.

The protein resides in the cytoplasm. It is found in the cytoplasmic vesicle. Its subcellular location is the clathrin-coated vesicle. The protein localises to the cell membrane. It localises to the late endosome. The protein resides in the autophagosome membrane. Functionally, regulator for autophaosome formation and/or maturation. Binds phosphatidylinositol-phosphate; highest affinity for vesicles containing PtdIns(3,4,5)P(3), followed by those containing PtdIns(4,5)P(2) and PtdIns(3,4)P(2), with minimal binding to phosphatidylinositol monophosphates, including PtdIns(3)P. Together with DRP1A, converts the fused vesicles to tubular structures at the cell plate during cytokinesis. The protein is SH3 domain-containing protein 2 of Arabidopsis thaliana (Mouse-ear cress).